Consider the following 257-residue polypeptide: NAD-capped RNA hydrolase NudC (257 aa).

Residue arginine 69 coordinates substrate. Positions 98 and 101 each coordinate Zn(2+). Glutamate 111 lines the substrate pocket. Zn(2+) is bound by residues cysteine 116 and cysteine 119. Tyrosine 124 contacts substrate. The region spanning 125-248 (PQIAPCIIVA…TVARRLIEDT (124 aa)) is the Nudix hydrolase domain. A divalent metal cation-binding residues include alanine 158, glutamate 174, and glutamate 178. A Nudix box motif is present at residues 159–180 (GFVEVGETLEQAVAREVMEESG). A substrate-binding site is contributed by 192–199 (QPWPFPQS). Residue glutamate 219 participates in a divalent metal cation binding. Alanine 241 is a binding site for substrate.

This sequence belongs to the Nudix hydrolase family. NudC subfamily. Homodimer. Mg(2+) serves as cofactor. It depends on Mn(2+) as a cofactor. Requires Zn(2+) as cofactor.

It carries out the reaction a 5'-end NAD(+)-phospho-ribonucleoside in mRNA + H2O = a 5'-end phospho-adenosine-phospho-ribonucleoside in mRNA + beta-nicotinamide D-ribonucleotide + 2 H(+). The catalysed reaction is NAD(+) + H2O = beta-nicotinamide D-ribonucleotide + AMP + 2 H(+). The enzyme catalyses NADH + H2O = reduced beta-nicotinamide D-ribonucleotide + AMP + 2 H(+). In terms of biological role, mRNA decapping enzyme that specifically removes the nicotinamide adenine dinucleotide (NAD) cap from a subset of mRNAs by hydrolyzing the diphosphate linkage to produce nicotinamide mononucleotide (NMN) and 5' monophosphate mRNA. The NAD-cap is present at the 5'-end of some mRNAs and stabilizes RNA against 5'-processing. Has preference for mRNAs with a 5'-end purine. Catalyzes the hydrolysis of a broad range of dinucleotide pyrophosphates. This chain is NAD-capped RNA hydrolase NudC, found in Salmonella heidelberg (strain SL476).